Consider the following 737-residue polypeptide: MPDHDSTALLSRQTKRRRVDIGVKRTVGTASAFFAKARATFFSAMNPQGSEQDVEYSVVQHADGEKSNVLRKLLKRANSYEDAMMPFPGATIISQLLKNNMNKNGGTEPSFQASGLSSTGSEVHQEDICSNSSRDSPPECLSPFGRPTMSQFDVDRLCDEHLRAKRARVENIIRGMSHSPSVALRGNENEREMAPQSVSPRESYRENKRKQKLPQQQQQSFQQLVSARKEQKREERRQLKQQLEDMQKQLRQLQEKFYQVYDSTDSENDEDGDLSEDSMRSEILDARAQDSVGRSDNEMCELDPGQFIDRARALIREQEMAENKPKREGSNKERDHGPNSLQPEGKHLAETLKQELNTAMSQVVDTVVKVFSAKPSRQVPQVFPPLQIPQARFAVNGENHNFHTANQRLQCFGDVIIPNPLDTFGSVQMPSSTDQTEALPLVVRKNSSEQSASGPATGGHHQPLHQSPLSATAGFTTPSFRHPFPLPLMAYPFQSPLGAPSGSFSGKDRASPESLDLTRDTTSLRTKMSSHHLSHHPCSPAHPPSTAEGLSLSLIKSECGDLQDMSDISPYSGSAMQEGLSPNHLKKAKLMFFYTRYPSSNMLKTYFSDVKFNRCITSQLIKWFSNFREFYYIQMEKYARQAINDGVTSTEELSITRDCELYRALNMHYNKANDFEVPERFLEVAQITLREFFNAIIAGKDVDPSWKKAIYKVICKLDSEVPEIFKSPNCLQELLHE.

The interaction with RORG stretch occupies residues 1-28 (MPDHDSTALLSRQTKRRRVDIGVKRTVG). The span at 103–135 (KNGGTEPSFQASGLSSTGSEVHQEDICSNSSRD) shows a compositional bias: polar residues. Positions 103 to 147 (KNGGTEPSFQASGLSSTGSEVHQEDICSNSSRDSPPECLSPFGRP) are disordered. Phosphoserine occurs at positions 177, 179, 199, 291, and 295. A disordered region spans residues 178-221 (HSPSVALRGNENEREMAPQSVSPRESYRENKRKQKLPQQQQQSF). Positions 320–337 (MAENKPKREGSNKERDHG) are enriched in basic and acidic residues. Disordered regions lie at residues 320–344 (MAEN…LQPE) and 444–476 (RKNS…AGFT). K324 participates in a covalent cross-link: Glycyl lysine isopeptide (Lys-Gly) (interchain with G-Cter in SUMO2). The span at 464–476 (LHQSPLSATAGFT) shows a compositional bias: polar residues. Residues S511 and S514 each carry the phosphoserine modification. Residues 525–547 (RTKMSSHHLSHHPCSPAHPPSTA) form a disordered region. S557 carries the post-translational modification Phosphoserine. The region spanning 577–635 (QEGLSPNHLKKAKLMFFYTRYPSSNMLKTYFSDVKFNRCITSQLIKWFSNFREFYYIQM) is the Prospero-type homeo domain. Positions 577–735 (QEGLSPNHLK…KSPNCLQELL (159 aa)) are homeo-Prospero. The region spanning 636–735 (EKYARQAIND…KSPNCLQELL (100 aa)) is the Prospero domain. Residues 723 to 729 (EIFKSPN) are essential for nuclear localization, interaction with RORG, repression of RORG transcriptional activator activity.

This sequence belongs to the Prospero homeodomain family. Interacts with RORA and RORG (via AF-2 motif). Expressed in the young neurons of the subventricular region of the CNS, developing eye lens and pancreas. It is also found in the developing liver, heart and skeletal muscle. In the eye, expressed in the lens and retina at postnatal day 10. In the retina, localized to the inner nuclear layer. In the lens, localized to epithelial and fiber cells.

The protein localises to the nucleus. Functionally, transcription factor involved in developmental processes such as cell fate determination, gene transcriptional regulation and progenitor cell regulation in a number of organs. Plays a critical role in embryonic development and functions as a key regulatory protein in neurogenesis and the development of the heart, eye lens, liver, pancreas and the lymphatic system. Involved in the regulation of the circadian rhythm. Represses: transcription of the retinoid-related orphan receptor RORG, transcriptional activator activity of RORA and RORG and the expression of RORA/G-target genes including core clock components: BMAL1, NPAS2 and CRY1 and metabolic genes: AVPR1A and ELOVL3. This Mus musculus (Mouse) protein is Prospero homeobox protein 1 (Prox1).